The chain runs to 112 residues: MAEIQFSKGVAETVVPEVRLSKSKNGQSGMAKFYFLEPTILAKESTDDITGMYLIDDEGEIITREVKGKFINGRPTAIEATVILNSQPEWDRFMRFMERYGAENGLGFSKSE.

This sequence belongs to the Psb28 family. As to quaternary structure, part of the photosystem II complex.

The protein resides in the cellular thylakoid membrane. This chain is Photosystem II reaction center Psb28 protein, found in Synechocystis sp. (strain ATCC 27184 / PCC 6803 / Kazusa).